The following is a 250-amino-acid chain: ATP synthase subunit a (250 aa).

The next 5 membrane-spanning stretches (helical) occupy residues 27-47, 86-106, 129-149, 191-211, and 219-239; these read TDTV…AFYL, FVLP…WLAV, INYV…AGIW, IFAG…IMWA, and FDLF…ILYF.

The protein belongs to the ATPase A chain family. F-type ATPases have 2 components, CF(1) - the catalytic core - and CF(0) - the membrane proton channel. CF(1) has five subunits: alpha(3), beta(3), gamma(1), delta(1), epsilon(1). CF(0) has three main subunits: a(1), b(2) and c(9-12). The alpha and beta chains form an alternating ring which encloses part of the gamma chain. CF(1) is attached to CF(0) by a central stalk formed by the gamma and epsilon chains, while a peripheral stalk is formed by the delta and b chains.

It localises to the cell membrane. Functionally, key component of the proton channel; it plays a direct role in the translocation of protons across the membrane. The protein is ATP synthase subunit a of Mycobacterium bovis (strain ATCC BAA-935 / AF2122/97).